The following is a 378-amino-acid chain: Myoglobin (378 aa).

Ala-2 carries the blocked amino end (Ala) modification. His-332 serves as a coordination point for heme.

Belongs to the indoleamine 2,3-dioxygenase family. In terms of assembly, homodimer. Heme is required as a cofactor.

In terms of biological role, serves a reserve supply of oxygen and facilitates the movement of oxygen within muscles. This Haliotis diversicolor (Abalone) protein is Myoglobin.